The chain runs to 1524 residues: DNA-directed RNA polymerase subunit beta' (1524 aa).

C58, C60, C73, and C76 together coordinate Zn(2+). Mg(2+) is bound by residues D739, D741, and D743. C1112, C1194, C1201, and C1204 together coordinate Zn(2+). Residues 1502 to 1524 form a disordered region; sequence AVEAKEKEAPRRPVRREQPGKGL.

Belongs to the RNA polymerase beta' chain family. In terms of assembly, the RNAP catalytic core consists of 2 alpha, 1 beta, 1 beta' and 1 omega subunit. When a sigma factor is associated with the core the holoenzyme is formed, which can initiate transcription. Mg(2+) serves as cofactor. Zn(2+) is required as a cofactor.

It carries out the reaction RNA(n) + a ribonucleoside 5'-triphosphate = RNA(n+1) + diphosphate. Functionally, DNA-dependent RNA polymerase catalyzes the transcription of DNA into RNA using the four ribonucleoside triphosphates as substrates. The chain is DNA-directed RNA polymerase subunit beta' from Thermus aquaticus.